We begin with the raw amino-acid sequence, 316 residues long: Ribose-phosphate pyrophosphokinase (316 aa).

Residues Asp39–Glu41 and Arg98–Gln99 contribute to the ATP site. Residues His133 and Asp172 each coordinate Mg(2+). The active site involves Lys195. D-ribose 5-phosphate-binding positions include Arg197, Asp221, and Asp225–Thr229.

The protein belongs to the ribose-phosphate pyrophosphokinase family. Class I subfamily. As to quaternary structure, homohexamer. It depends on Mg(2+) as a cofactor.

The protein resides in the cytoplasm. The catalysed reaction is D-ribose 5-phosphate + ATP = 5-phospho-alpha-D-ribose 1-diphosphate + AMP + H(+). It functions in the pathway metabolic intermediate biosynthesis; 5-phospho-alpha-D-ribose 1-diphosphate biosynthesis; 5-phospho-alpha-D-ribose 1-diphosphate from D-ribose 5-phosphate (route I): step 1/1. In terms of biological role, involved in the biosynthesis of the central metabolite phospho-alpha-D-ribosyl-1-pyrophosphate (PRPP) via the transfer of pyrophosphoryl group from ATP to 1-hydroxyl of ribose-5-phosphate (Rib-5-P). The polypeptide is Ribose-phosphate pyrophosphokinase (Ralstonia nicotianae (strain ATCC BAA-1114 / GMI1000) (Ralstonia solanacearum)).